We begin with the raw amino-acid sequence, 192 residues long: Peptidyl-tRNA hydrolase (192 aa).

Tyr14 provides a ligand contact to tRNA. His19 acts as the Proton acceptor in catalysis. TRNA is bound by residues Tyr66 and Asn68.

Belongs to the PTH family. Monomer.

It is found in the cytoplasm. The enzyme catalyses an N-acyl-L-alpha-aminoacyl-tRNA + H2O = an N-acyl-L-amino acid + a tRNA + H(+). Functionally, hydrolyzes ribosome-free peptidyl-tRNAs (with 1 or more amino acids incorporated), which drop off the ribosome during protein synthesis, or as a result of ribosome stalling. Its function is as follows. Catalyzes the release of premature peptidyl moieties from peptidyl-tRNA molecules trapped in stalled 50S ribosomal subunits, and thus maintains levels of free tRNAs and 50S ribosomes. The sequence is that of Peptidyl-tRNA hydrolase from Coprothermobacter proteolyticus (strain ATCC 35245 / DSM 5265 / OCM 4 / BT).